Reading from the N-terminus, the 336-residue chain is Phospho-N-acetylmuramoyl-pentapeptide-transferase (336 aa).

10 helical membrane-spanning segments follow: residues 3 to 23, 53 to 73, 78 to 98, 118 to 138, 143 to 163, 174 to 194, 200 to 220, 226 to 246, 251 to 271, and 316 to 336; these read LTLI…PYFI, GGTV…LFSI, SLAL…IGFL, LALQ…PSGI, VFGY…FWVV, GIDG…GVIA, FDVL…FCFN, VFMG…ISIA, WTLL…MLQV, and AFLW…LYVF.

Belongs to the glycosyltransferase 4 family. MraY subfamily. The cofactor is Mg(2+).

The protein resides in the cell membrane. It carries out the reaction UDP-N-acetyl-alpha-D-muramoyl-L-alanyl-gamma-D-glutamyl-L-lysyl-D-alanyl-D-alanine + di-trans,octa-cis-undecaprenyl phosphate = Mur2Ac(oyl-L-Ala-gamma-D-Glu-L-Lys-D-Ala-D-Ala)-di-trans,octa-cis-undecaprenyl diphosphate + UMP. Its pathway is cell wall biogenesis; peptidoglycan biosynthesis. In terms of biological role, catalyzes the initial step of the lipid cycle reactions in the biosynthesis of the cell wall peptidoglycan: transfers peptidoglycan precursor phospho-MurNAc-pentapeptide from UDP-MurNAc-pentapeptide onto the lipid carrier undecaprenyl phosphate, yielding undecaprenyl-pyrophosphoryl-MurNAc-pentapeptide, known as lipid I. The polypeptide is Phospho-N-acetylmuramoyl-pentapeptide-transferase (Streptococcus pyogenes serotype M49 (strain NZ131)).